The primary structure comprises 599 residues: Putative sensor histidine kinase NtrY-like (599 aa).

A run of 4 helical transmembrane segments spans residues 17–37 (VLIFTLAIAAIIFACATFYVI), 44–64 (FSTIIGFLLVDLAIFLILGVL), 85–105 (IVIAFSLVAAIPTIIVSVFSV), and 285–305 (IMFIFIALLLLFVAISFGVIF). Residues 307–361 (AKIVKPIKKLVTATDKVKDGDLTVQVPENEVDKDEIGTLYAAFNRMIKQLSRQQR) enclose the HAMP domain. The Histidine kinase domain maps to 378 to 589 (KVAHEIKNPL…IIDIKFDLKK (212 aa)). Phosphohistidine; by autocatalysis is present on H381.

The protein resides in the cell membrane. It catalyses the reaction ATP + protein L-histidine = ADP + protein N-phospho-L-histidine.. Its function is as follows. Member of the two-component regulatory system RF_0427/RF_0895. This is Putative sensor histidine kinase NtrY-like from Rickettsia felis (strain ATCC VR-1525 / URRWXCal2) (Rickettsia azadi).